Reading from the N-terminus, the 253-residue chain is MLAKRIIPCLDVDKGRVVKGVKFLNLRDAGDPVEVAKRYEEEGADELVFLDITASAEDREIMIDVVKKVAETVFMPFTVGGGIRSLEDMRRLLEAGADKISINTAAVKNPNLIYEGAKRFGSQCIVVAIDAKRKGNSWEVYIHGGRTPTGLDAVEWAKKVESLGAGEILLTSMDRDGTKDGYDIELNRAISEAVNIPVIASGGAGKKEHFYEVFSKTKVEAALAASVFHFREISIPELKEYLLERGINVRPLD.

Catalysis depends on residues Asp11 and Asp130.

It belongs to the HisA/HisF family. In terms of assembly, heterodimer of HisH and HisF.

The protein resides in the cytoplasm. It catalyses the reaction 5-[(5-phospho-1-deoxy-D-ribulos-1-ylimino)methylamino]-1-(5-phospho-beta-D-ribosyl)imidazole-4-carboxamide + L-glutamine = D-erythro-1-(imidazol-4-yl)glycerol 3-phosphate + 5-amino-1-(5-phospho-beta-D-ribosyl)imidazole-4-carboxamide + L-glutamate + H(+). It functions in the pathway amino-acid biosynthesis; L-histidine biosynthesis; L-histidine from 5-phospho-alpha-D-ribose 1-diphosphate: step 5/9. IGPS catalyzes the conversion of PRFAR and glutamine to IGP, AICAR and glutamate. The HisF subunit catalyzes the cyclization activity that produces IGP and AICAR from PRFAR using the ammonia provided by the HisH subunit. The chain is Imidazole glycerol phosphate synthase subunit HisF (hisF) from Aquifex aeolicus (strain VF5).